The chain runs to 531 residues: Flavin-containing monooxygenase 3 (531 aa).

FAD-binding positions include 9–13 (GAGVS), E32, 40–41 (LW), and 61–62 (NS). Residues 60-61 (TN) and 195-198 (SGCD) contribute to the NADP(+) site. Position 401 is a phosphoserine (S401). A helical transmembrane segment spans residues 511-531 (YSHFLRLLAVPVLIALFLVLI).

It belongs to the FMO family. FAD is required as a cofactor. As to expression, detected in liver and kidney (at protein level). Expressed in kidney and liver. Weakly expressed in lung. Does not seem to be expressed in brain, adipose tissue, or muscle.

Its subcellular location is the microsome membrane. It is found in the endoplasmic reticulum membrane. The catalysed reaction is trimethylamine + NADPH + O2 = trimethylamine N-oxide + NADP(+) + H2O. The enzyme catalyses N,N-dimethylaniline + NADPH + O2 + H(+) = N,N-dimethylaniline N-oxide + NADP(+) + H2O. It catalyses the reaction hypotaurine + NADPH + O2 + H(+) = taurine + NADP(+) + H2O. It carries out the reaction (S)-nicotine + NADPH + O2 = trans-(S)-nicotine N(1')-oxide + NADP(+) + H2O. The catalysed reaction is albendazole + NADPH + O2 + H(+) = albendazole S-oxide + NADP(+) + H2O. Functionally, essential hepatic enzyme that catalyzes the oxygenation of a wide variety of nitrogen- and sulfur-containing compounds including drugs as well as dietary compounds. Plays an important role in the metabolism of trimethylamine (TMA), via the production of trimethylamine N-oxide (TMAO) metabolite. TMA is generated by the action of gut microbiota using dietary precursors such as choline, choline containing compounds, betaine or L-carnitine. By regulating TMAO concentration, FMO3 directly impacts both platelet responsiveness and rate of thrombus formation. The chain is Flavin-containing monooxygenase 3 (Fmo3) from Rattus norvegicus (Rat).